We begin with the raw amino-acid sequence, 483 residues long: Proline--tRNA ligase (483 aa).

This sequence belongs to the class-II aminoacyl-tRNA synthetase family. ProS type 3 subfamily. Homodimer.

It localises to the cytoplasm. The enzyme catalyses tRNA(Pro) + L-proline + ATP = L-prolyl-tRNA(Pro) + AMP + diphosphate. Its function is as follows. Catalyzes the attachment of proline to tRNA(Pro) in a two-step reaction: proline is first activated by ATP to form Pro-AMP and then transferred to the acceptor end of tRNA(Pro). This chain is Proline--tRNA ligase, found in Sulfurisphaera tokodaii (strain DSM 16993 / JCM 10545 / NBRC 100140 / 7) (Sulfolobus tokodaii).